The primary structure comprises 478 residues: tRNA(Ile)-lysidine synthase (478 aa).

Residue 27-32 (SGGSDS) coordinates ATP.

Belongs to the tRNA(Ile)-lysidine synthase family.

It is found in the cytoplasm. The catalysed reaction is cytidine(34) in tRNA(Ile2) + L-lysine + ATP = lysidine(34) in tRNA(Ile2) + AMP + diphosphate + H(+). Its function is as follows. Ligates lysine onto the cytidine present at position 34 of the AUA codon-specific tRNA(Ile) that contains the anticodon CAU, in an ATP-dependent manner. Cytidine is converted to lysidine, thus changing the amino acid specificity of the tRNA from methionine to isoleucine. This Rickettsia africae (strain ESF-5) protein is tRNA(Ile)-lysidine synthase.